The chain runs to 151 residues: Large ribosomal subunit protein bL9 (151 aa).

Belongs to the bacterial ribosomal protein bL9 family.

In terms of biological role, binds to the 23S rRNA. This Chlorobium phaeovibrioides (strain DSM 265 / 1930) (Prosthecochloris vibrioformis (strain DSM 265)) protein is Large ribosomal subunit protein bL9.